Consider the following 527-residue polypeptide: Bifunctional purine biosynthesis protein PurH (527 aa).

Residues 9–156 (MARKPIRRAL…KNHPSVAVVT (148 aa)) form the MGS-like domain.

Belongs to the PurH family.

It carries out the reaction (6R)-10-formyltetrahydrofolate + 5-amino-1-(5-phospho-beta-D-ribosyl)imidazole-4-carboxamide = 5-formamido-1-(5-phospho-D-ribosyl)imidazole-4-carboxamide + (6S)-5,6,7,8-tetrahydrofolate. The catalysed reaction is IMP + H2O = 5-formamido-1-(5-phospho-D-ribosyl)imidazole-4-carboxamide. The protein operates within purine metabolism; IMP biosynthesis via de novo pathway; 5-formamido-1-(5-phospho-D-ribosyl)imidazole-4-carboxamide from 5-amino-1-(5-phospho-D-ribosyl)imidazole-4-carboxamide (10-formyl THF route): step 1/1. It participates in purine metabolism; IMP biosynthesis via de novo pathway; IMP from 5-formamido-1-(5-phospho-D-ribosyl)imidazole-4-carboxamide: step 1/1. The polypeptide is Bifunctional purine biosynthesis protein PurH (Mycobacterium leprae (strain Br4923)).